Reading from the N-terminus, the 310-residue chain is N-acetyl-gamma-glutamyl-phosphate reductase (310 aa).

Cysteine 117 is a catalytic residue.

The protein belongs to the NAGSA dehydrogenase family. Type 2 subfamily.

It is found in the cytoplasm. It carries out the reaction N-acetyl-L-glutamate 5-semialdehyde + phosphate + NADP(+) = N-acetyl-L-glutamyl 5-phosphate + NADPH + H(+). Its pathway is amino-acid biosynthesis; L-arginine biosynthesis; N(2)-acetyl-L-ornithine from L-glutamate: step 3/4. Functionally, catalyzes the NADPH-dependent reduction of N-acetyl-5-glutamyl phosphate to yield N-acetyl-L-glutamate 5-semialdehyde. In Rhizobium johnstonii (strain DSM 114642 / LMG 32736 / 3841) (Rhizobium leguminosarum bv. viciae), this protein is N-acetyl-gamma-glutamyl-phosphate reductase.